A 332-amino-acid chain; its full sequence is Formamidase (332 aa).

In terms of domain architecture, CN hydrolase spans 14-259; the sequence is FLTALIQYPV…WEIVTAEVYP (246 aa). Residue glutamate 60 is the Proton acceptor of the active site. Lysine 132 acts as the Proton donor in catalysis. Catalysis depends on cysteine 165, which acts as the Nucleophile.

Belongs to the carbon-nitrogen hydrolase superfamily. Aliphatic amidase family.

The enzyme catalyses formamide + H2O = formate + NH4(+). Is an aliphatic amidase with a restricted substrate specificity, as it only hydrolyzes formamide. This chain is Formamidase, found in Bacillus cereus (strain B4264).